The primary structure comprises 127 residues: Small ribosomal subunit protein eS8 (127 aa).

Belongs to the eukaryotic ribosomal protein eS8 family. Part of the 30S ribosomal subunit.

This chain is Small ribosomal subunit protein eS8, found in Nanoarchaeum equitans (strain Kin4-M).